Reading from the N-terminus, the 353-residue chain is UDP-N-acetylglucosamine--N-acetylmuramyl-(pentapeptide) pyrophosphoryl-undecaprenol N-acetylglucosamine transferase (353 aa).

UDP-N-acetyl-alpha-D-glucosamine contacts are provided by residues 10-12, asparagine 124, serine 183, and glutamine 283; that span reads TGG.

It belongs to the glycosyltransferase 28 family. MurG subfamily.

It is found in the cell inner membrane. It catalyses the reaction di-trans,octa-cis-undecaprenyl diphospho-N-acetyl-alpha-D-muramoyl-L-alanyl-D-glutamyl-meso-2,6-diaminopimeloyl-D-alanyl-D-alanine + UDP-N-acetyl-alpha-D-glucosamine = di-trans,octa-cis-undecaprenyl diphospho-[N-acetyl-alpha-D-glucosaminyl-(1-&gt;4)]-N-acetyl-alpha-D-muramoyl-L-alanyl-D-glutamyl-meso-2,6-diaminopimeloyl-D-alanyl-D-alanine + UDP + H(+). Its pathway is cell wall biogenesis; peptidoglycan biosynthesis. Functionally, cell wall formation. Catalyzes the transfer of a GlcNAc subunit on undecaprenyl-pyrophosphoryl-MurNAc-pentapeptide (lipid intermediate I) to form undecaprenyl-pyrophosphoryl-MurNAc-(pentapeptide)GlcNAc (lipid intermediate II). This is UDP-N-acetylglucosamine--N-acetylmuramyl-(pentapeptide) pyrophosphoryl-undecaprenol N-acetylglucosamine transferase from Helicobacter pylori (strain ATCC 700392 / 26695) (Campylobacter pylori).